The primary structure comprises 322 residues: Extracellular metalloprotease AFUB_008060 (322 aa).

The first 22 residues, 1 to 22 (MLPFNSCVYVLLIISLMSNCRA), serve as a signal peptide directing secretion. Residues Asn123 and Asn197 are each glycosylated (N-linked (GlcNAc...) asparagine). Residue His233 coordinates Zn(2+). Glu234 is a catalytic residue. His237 contributes to the Zn(2+) binding site. A disulfide bridge connects residues Cys272 and Cys299.

It belongs to the peptidase M43B family.

The protein resides in the secreted. Its function is as follows. Secreted metalloproteinase that allows assimilation of proteinaceous substrates. Plays a pivotal role as a pathogenicity determinant during infections and contributes to the ability of the pathogen to persist within the mammalian host. This is Extracellular metalloprotease AFUB_008060 from Aspergillus fumigatus (strain CBS 144.89 / FGSC A1163 / CEA10) (Neosartorya fumigata).